Consider the following 516-residue polypeptide: Bifunctional purine biosynthesis protein PurH (516 aa).

Residues 1-146 (MTRLALLSVS…KNYAHVTVLS (146 aa)) enclose the MGS-like domain.

Belongs to the PurH family.

The enzyme catalyses (6R)-10-formyltetrahydrofolate + 5-amino-1-(5-phospho-beta-D-ribosyl)imidazole-4-carboxamide = 5-formamido-1-(5-phospho-D-ribosyl)imidazole-4-carboxamide + (6S)-5,6,7,8-tetrahydrofolate. The catalysed reaction is IMP + H2O = 5-formamido-1-(5-phospho-D-ribosyl)imidazole-4-carboxamide. It functions in the pathway purine metabolism; IMP biosynthesis via de novo pathway; 5-formamido-1-(5-phospho-D-ribosyl)imidazole-4-carboxamide from 5-amino-1-(5-phospho-D-ribosyl)imidazole-4-carboxamide (10-formyl THF route): step 1/1. Its pathway is purine metabolism; IMP biosynthesis via de novo pathway; IMP from 5-formamido-1-(5-phospho-D-ribosyl)imidazole-4-carboxamide: step 1/1. The polypeptide is Bifunctional purine biosynthesis protein PurH (Rippkaea orientalis (strain PCC 8801 / RF-1) (Cyanothece sp. (strain PCC 8801))).